The sequence spans 1166 residues: Peroxisomal ATPase PEX6 (1166 aa).

This sequence belongs to the AAA ATPase family. Interacts with PEX1; forming the PEX1-PEX6 AAA ATPase complex, which is composed of a heterohexamer formed by a trimer of PEX1-PEX6 dimers.

It is found in the membrane. It catalyses the reaction ATP + H2O = ADP + phosphate + H(+). Functionally, component of the PEX1-PEX6 AAA ATPase complex involved in peroxisome biosynthesis. The complex acts as a protein dislocase complex that mediates the ATP-dependent extraction of the PEX5 receptor from peroxisomal membranes, an essential step for PEX5 recycling. Specifically recognizes PEX5 monoubiquitinated at 'Cys-6', and pulls it out of the peroxisome lumen through the PEX2-PEX10-PEX12 retrotranslocation channel. Extraction by the PEX1-PEX6 AAA ATPase complex is accompanied by unfolding of the TPR repeats and release of bound cargo from PEX5. The sequence is that of Peroxisomal ATPase PEX6 from Komagataella phaffii (strain GS115 / ATCC 20864) (Yeast).